We begin with the raw amino-acid sequence, 652 residues long: DNA polymerase epsilon subunit B (652 aa).

The protein belongs to the DNA polymerase epsilon subunit B family. Heterotetramer. Consists of four subunits: POL2, DPB2, DPB3 and DPB4.

Its subcellular location is the nucleus. Its function is as follows. As accessory component of the DNA polymerase epsilon (DNA polymerase II) participates in chromosomal DNA replication. This is DNA polymerase epsilon subunit B (DPB2) from Yarrowia lipolytica (strain CLIB 122 / E 150) (Yeast).